Consider the following 386-residue polypeptide: Protein-glutamate methylesterase/protein-glutamine glutaminase 3 (386 aa).

The region spanning 4–121 (KVLVVDDSGF…SRNPQKVKQL (118 aa)) is the Response regulatory domain. Aspartate 55 carries the 4-aspartylphosphate modification. Residues 132–194 (SNRRSSGFGS…SHAPAHPTTS (63 aa)) are compositionally biased toward low complexity. The interval 132–197 (SNRRSSGFGS…PAHPTTSGTA (66 aa)) is disordered. One can recognise a CheB-type methylesterase domain in the interval 191 to 383 (PTTSGTAKRK…LDDIGRHLVE (193 aa)). Active-site residues include serine 210, histidine 237, and aspartate 330.

It belongs to the CheB family. Phosphorylated by CheA. Phosphorylation of the N-terminal regulatory domain activates the methylesterase activity.

The protein resides in the cytoplasm. The catalysed reaction is [protein]-L-glutamate 5-O-methyl ester + H2O = L-glutamyl-[protein] + methanol + H(+). It catalyses the reaction L-glutaminyl-[protein] + H2O = L-glutamyl-[protein] + NH4(+). In terms of biological role, involved in chemotaxis. Part of a chemotaxis signal transduction system that modulates chemotaxis in response to various stimuli. Catalyzes the demethylation of specific methylglutamate residues introduced into the chemoreceptors (methyl-accepting chemotaxis proteins or MCP) by CheR. Also mediates the irreversible deamidation of specific glutamine residues to glutamic acid. The polypeptide is Protein-glutamate methylesterase/protein-glutamine glutaminase 3 (Pseudomonas syringae pv. syringae (strain B728a)).